A 327-amino-acid polypeptide reads, in one-letter code: Protein hunchback (327 aa).

C2H2-type zinc fingers lie at residues 1–5 (HMRNH), 11–33 (FQCS…LKSH), and 39–63 (YRCA…KYQH). 3 disordered regions span residues 91-121 (KQKP…HPIF), 143-170 (PPNN…MSPP), and 182-290 (ERPL…EVAS). Basic and acidic residues-rich tracts occupy residues 205–216 (THREMPTEHGDD) and 265–276 (LQHEDEKMRDAD). 2 consecutive C2H2-type zinc fingers follow at residues 297–319 (YTCQ…MGFH) and 325–327 (FMC).

Belongs to the hunchback C2H2-type zinc-finger protein family.

Its subcellular location is the nucleus. In terms of biological role, gap class segmentation protein that controls development of head structures. The polypeptide is Protein hunchback (hb) (Manduca sexta (Tobacco hawkmoth)).